Here is a 590-residue protein sequence, read N- to C-terminus: Muscarinic acetylcholine receptor M3 (590 aa).

Over 1 to 67 (MTLHNNNTTS…DPLGGHTIWQ (67 aa)) the chain is Extracellular. 6 N-linked (GlcNAc...) asparagine glycosylation sites follow: Asn-6, Asn-7, Asn-15, Asn-41, Asn-48, and Asn-53. The helical transmembrane segment at 68–91 (VVFIAFLTGILALVTIIGNILVIV) threads the bilayer. The Cytoplasmic segment spans residues 92-104 (AFKVNKQLKTVNN). Residues 105 to 130 (YFLLSLACADLIIGVISMNLFTTYII) form a helical membrane-spanning segment. At 131-142 (MNRWALGNLACD) the chain is on the extracellular side. Cys-141 and Cys-221 are joined by a disulfide. The helical transmembrane segment at 143–164 (LWLSIDYVASNASVMNLLVISF) threads the bilayer. Topologically, residues 165 to 184 (DRYFSITRPLTYRAKRTTKR) are cytoplasmic. A helical membrane pass occupies residues 185–206 (AGVMIGLAWVISFILWAPAILF). At 207–229 (WQYFVGKRTVPPGECFIQFLSEP) the chain is on the extracellular side. Residues 230 to 252 (TITFGTAIAAFYMPVTIMTILYW) traverse the membrane as a helical segment. Topologically, residues 253-491 (RIYKETEKRT…SLIKEKKAAQ (239 aa)) are cytoplasmic. A Basolateral sorting signal motif is present at residues 275–281 (AEAENFV). The segment at 324–357 (AEQMDQDHSSSDSWNNNDAAASLENSASSDEEDI) is disordered. Residues 334 to 345 (SDSWNNNDAAAS) are compositionally biased toward low complexity. Ser-385 is modified (phosphoserine). The helical transmembrane segment at 492-514 (TLSAILLAFIITWTPYNIMVLVN) threads the bilayer. Over 515-526 (TFCDSCIPKTYW) the chain is Extracellular. Cysteines 517 and 520 form a disulfide. The chain crosses the membrane as a helical span at residues 527–546 (NLGYWLCYINSTVNPVCYAL). Topologically, residues 547-590 (CNKTFRTTFKMLLLCQCDKRKRRKQQYQQRQSVIFHKRVPEQAL) are cytoplasmic.

The protein belongs to the G-protein coupled receptor 1 family. Muscarinic acetylcholine receptor subfamily. CHRM3 sub-subfamily. Homodimer; the dimers can form tetramers. Interacts with NALCN. Interacts with TMEM147.

It localises to the cell membrane. The protein resides in the postsynaptic cell membrane. The protein localises to the basolateral cell membrane. Its subcellular location is the endoplasmic reticulum membrane. Functionally, the muscarinic acetylcholine receptor mediates various cellular responses, including inhibition of adenylate cyclase, breakdown of phosphoinositides and modulation of potassium channels through the action of G proteins. Primary transducing effect is Pi turnover. This is Muscarinic acetylcholine receptor M3 (CHRM3) from Sus scrofa (Pig).